The primary structure comprises 209 residues: Probable glutathione peroxidase 8-B (209 aa).

Residues 18 to 40 form a helical membrane-spanning segment; sequence VFLVFFSMVLCTGILCVLQLKFL. The active site involves C79.

It belongs to the glutathione peroxidase family.

It is found in the membrane. The catalysed reaction is 2 glutathione + H2O2 = glutathione disulfide + 2 H2O. The chain is Probable glutathione peroxidase 8-B (gpx8-b) from Xenopus laevis (African clawed frog).